We begin with the raw amino-acid sequence, 493 residues long: Transcript termination protein A18 (493 aa).

In terms of domain architecture, Helicase ATP-binding spans 100–256 (MIESKRPLYI…NSIINIAKLS (157 aa)). ATP is bound at residue 113-120 (LACGFGKT). Positions 206-209 (DESH) match the DESH box motif.

Belongs to the helicase family. Poxviruses subfamily. Interacts with G2. Might be part of a transcription complex composed at least of G2, A18, and H5.

The protein localises to the virion. Functionally, DNA helicase which seems to act as a postreplicative transcription termination factor. Involved in ATP-dependent release of nascent RNA. Forms a stable complex with single-stranded DNA, and to a lesser extent RNA. The sequence is that of Transcript termination protein A18 from Homo sapiens (Human).